The chain runs to 201 residues: Protein S40-5 (201 aa).

2 disordered regions span residues 1–39 (MARG…LTEE) and 134–178 (SIHE…EGVG). A compositionally biased stretch (low complexity) spans 17–29 (GSSYSYGDSNGNS).

The protein belongs to the senescence regulator S40 family.

It is found in the cytoplasm. The sequence is that of Protein S40-5 from Arabidopsis thaliana (Mouse-ear cress).